Consider the following 163-residue polypeptide: R-phycoerythrin alpha chain (163 aa).

Positions 82 and 139 each coordinate (2R,3E)-phycoerythrobilin.

Belongs to the phycobiliprotein family. In terms of assembly, heterodimer of an alpha and a beta chain. Contains two covalently linked bilin chromophores.

The protein localises to the plastid. The protein resides in the chloroplast thylakoid membrane. Functionally, light-harvesting photosynthetic bile pigment-protein from the phycobiliprotein complex. The polypeptide is R-phycoerythrin alpha chain (cpeA) (Aglaothamnion neglectum (Red alga)).